A 395-amino-acid polypeptide reads, in one-letter code: MAAPCFLTLRVATLAALALLSLGSSAAGHIEDQAEQFFRSGHTNNWAVLVCTSRFWFNYRHVANTLSVYRSVKRLGIPDSHIVLMLADDMACNARNPKPATVFSHKNMELNVYGDDVEVDYRSYEVTVENFLRVLTGRVPPSTPRSKRLLSDDRSNILIYMTGHGGNGFLKFQDSEEITNIELADAFEQMWQKRRYNELLFIIDTCQGASMYERFYSPNIMALASSQVGEDSLSHQPDPAIGVHLMDRYTFYVLEFLEEINPASQTNMNDLFQVCPKSLCVSTPGHRTDLFQRDPKNVLITDFFGSVRKVEITTEKISLQWDSQVVDSSSKEDGTAEERMGPLKYAEQLPVAQIIHQKPKPRDWHPPGGFILGLWALIIMVFFKTYGIKHMKFIF.

An N-terminal signal peptide occupies residues 1-27 (MAAPCFLTLRVATLAALALLSLGSSAA). The Lumenal segment spans residues 28–368 (GHIEDQAEQF…PKPRDWHPPG (341 aa)). Ca(2+) is bound by residues aspartate 79, isoleucine 82, glutamate 118, and aspartate 120. Residue histidine 164 is the Proton donor of the active site. Cysteine 206 acts as the Nucleophile; acyl-thioester intermediate in catalysis. Positions 206, 232, and 234 each coordinate a protein. Positions 231-236 (DSLSHQ) are autoinhibitory loop. Cysteine 275 and cysteine 280 are joined by a disulfide. The chain crosses the membrane as a helical span at residues 369–385 (GFILGLWALIIMVFFKT). Residues 386 to 395 (YGIKHMKFIF) lie on the Cytoplasmic side of the membrane.

It belongs to the peptidase C13 family. Heteropentamer. Part of the GPI-anchor transamidase complex, consisting of PIGK, PIGT, PIGS, PIGU and GAA1. Interacts with GPAA1. Interacts with PIGT; this interaction, via a disulfide link, stabilizes the expression of GAA1 and PIGK and links them to PIGS. In terms of processing, the disulfide bond between PIGK/GPI8 and PIGT is important for normal enzyme activity.

The protein localises to the endoplasmic reticulum membrane. Its pathway is glycolipid biosynthesis; glycosylphosphatidylinositol-anchor biosynthesis. Its activity is regulated as follows. In the absence of proproteins substrates, exists in an inactive state with a disrupted catalytic site by an autoinhibitory loop. The binding of proprotein substrates, particularly the CSP region, to GPI-T triggers concerted conformational changes that alleviate the inhibition by the autoinhibitory loop. Meanwhile, proprotein residues near the omega- site induce the formation of a catalytic cleft for catalysis, following which the products are released and GPI-T reverts to the inactive state. Functionally, catalytic subunit of the glycosylphosphatidylinositol-anchor (GPI-anchor) transamidase (GPI-T) complex that catalyzes the formation of the linkage between a proprotein and a GPI-anchor and participates in GPI anchored protein biosynthesis. Recognizes diverse proproteins at a C-terminal signal peptide (CSP) region that lacks consensus sequence and replaces it with a GPI-anchor via a transamidation reaction. Transamidation catalysis reaction follows a two-phase mechanism. In the acyl-enzyme phase, the carbonyl group of the proproteins's omega-site undergoes a nucleophilic attack forming an enzyme-substrate thioester bond. Followed by a general acid catalysis that allows CSP releasing, regenerating the carbonyl, and forming the acyl-enzyme intermediate. In the GPI-anchor attachment phase, the amino group of the GPI-anchor's ethanolamine phosphate, the one on third mannose (EtNP3), mediates a nucleophilic attack on the carbonyl of the acyl-enzyme intermediate, replacing the CSP, allowing GPI-anchor attachment to the omega-residue, therefore forming the product and freeing the enzyme. The chain is GPI-anchor transamidase from Mus musculus (Mouse).